We begin with the raw amino-acid sequence, 244 residues long: INO80 complex subunit E (244 aa).

Residues 10-54 (DYKKKYRNLKRKLKFLIYEHECFQEELRKAQRKLLKVSRDKSFLL) are a coiled coil. Disordered stretches follow at residues 59–187 (QYEN…PLTF) and 222–244 (FSDA…DIPE). Low complexity-rich tracts occupy residues 99-115 (PPLG…LPPS) and 122-136 (ASRA…LASP). A compositionally biased stretch (basic residues) spans 157 to 171 (RPKREKRPRLPRKLK). Glycyl lysine isopeptide (Lys-Gly) (interchain with G-Cter in SUMO2) cross-links involve residues Lys159 and Lys171. The segment covering 230 to 244 (DALDGDDDLVIDIPE) has biased composition (acidic residues).

As to quaternary structure, component of the chromatin remodeling INO80 complex; specifically part of a complex module associated with the N-terminus of INO80.

It localises to the nucleus. In terms of biological role, putative regulatory component of the chromatin remodeling INO80 complex which is involved in transcriptional regulation, DNA replication and probably DNA repair. The protein is INO80 complex subunit E (INO80E) of Bos taurus (Bovine).